Reading from the N-terminus, the 309-residue chain is Histone-lysine N-methyltransferase SETMAR (309 aa).

The region spanning 74–137 (PGCACIETPC…RCRNRVVQNG (64 aa)) is the Pre-SET domain. Zn(2+)-binding residues include cysteine 76, cysteine 78, cysteine 83, cysteine 88, cysteine 90, cysteine 119, cysteine 123, cysteine 125, and cysteine 129. An SET domain is found at 140 to 264 (FLLQVFQTEK…PGEELSYDYS (125 aa)). Residues 150-152 (KGW), tyrosine 193, arginine 221, and 224-225 (NH) each bind S-adenosyl-L-methionine. Zn(2+) contacts are provided by cysteine 227, cysteine 288, cysteine 290, and cysteine 295. The Post-SET domain maps to 284–300 (PRKPCYCGAQSCTTFLP).

This sequence belongs to the class V-like SAM-binding methyltransferase superfamily.

The protein localises to the nucleus. Its subcellular location is the chromosome. It carries out the reaction L-lysyl(36)-[histone H3] + 2 S-adenosyl-L-methionine = N(6),N(6)-dimethyl-L-lysyl(36)-[histone H3] + 2 S-adenosyl-L-homocysteine + 2 H(+). In terms of biological role, histone methyltransferase that methylates 'Lys-4' and 'Lys-36' of histone H3, 2 specific tags for epigenetic transcriptional activation. Specifically mediates dimethylation of H3 'Lys-36'. The sequence is that of Histone-lysine N-methyltransferase SETMAR from Mus musculus (Mouse).